The sequence spans 152 residues: Aspartate carbamoyltransferase regulatory chain (152 aa).

Positions 108, 113, 137, and 140 each coordinate Zn(2+).

Belongs to the PyrI family. In terms of assembly, contains catalytic and regulatory chains. It depends on Zn(2+) as a cofactor.

Its function is as follows. Involved in allosteric regulation of aspartate carbamoyltransferase. The polypeptide is Aspartate carbamoyltransferase regulatory chain (Neisseria meningitidis serogroup A / serotype 4A (strain DSM 15465 / Z2491)).